The primary structure comprises 172 residues: Cytochrome b6-f complex iron-sulfur subunit (172 aa).

A helical transmembrane segment spans residues 17–39 (VFLNALLSSSVGVVVVGTLYPVV). In terms of domain architecture, Rieske spans 61-161 (GKPISVSELL…ATVDGDNVRF (101 aa)). [2Fe-2S] cluster contacts are provided by cysteine 107, histidine 109, cysteine 125, and histidine 128. Cysteine 112 and cysteine 127 are oxidised to a cystine.

This sequence belongs to the Rieske iron-sulfur protein family. In terms of assembly, the 4 large subunits of the cytochrome b6-f complex are cytochrome b6, subunit IV (17 kDa polypeptide, PetD), cytochrome f and the Rieske protein, while the 4 small subunits are PetG, PetL, PetM and PetN. The complex functions as a dimer. It depends on [2Fe-2S] cluster as a cofactor.

It localises to the cellular thylakoid membrane. The enzyme catalyses 2 oxidized [plastocyanin] + a plastoquinol + 2 H(+)(in) = 2 reduced [plastocyanin] + a plastoquinone + 4 H(+)(out). In terms of biological role, component of the cytochrome b6-f complex, which mediates electron transfer between photosystem II (PSII) and photosystem I (PSI), cyclic electron flow around PSI, and state transitions. This chain is Cytochrome b6-f complex iron-sulfur subunit, found in Synechococcus sp. (strain JA-3-3Ab) (Cyanobacteria bacterium Yellowstone A-Prime).